The chain runs to 251 residues: Flap endonuclease Xni (251 aa).

Asp-104 lines the Mg(2+) pocket. Residues Val-160–Leu-249 form the 5'-3' exonuclease domain. The K(+) site is built by Leu-171, Ala-172, Pro-180, Val-182, and Ile-185. The segment at Gly-184 to Ser-189 is interaction with DNA.

Belongs to the Xni family. Requires Mg(2+) as cofactor. K(+) serves as cofactor.

Has flap endonuclease activity. During DNA replication, flap endonucleases cleave the 5'-overhanging flap structure that is generated by displacement synthesis when DNA polymerase encounters the 5'-end of a downstream Okazaki fragment. The sequence is that of Flap endonuclease Xni from Salmonella paratyphi A (strain ATCC 9150 / SARB42).